Here is a 124-residue protein sequence, read N- to C-terminus: Late embryogenesis abundant protein 37 (124 aa).

Residues 1-35 constitute a mitochondrion transit peptide; that stretch reads MSQSLFNLKSLSRSINNTIRMRRYIVITKASQRAY.

The protein belongs to the LEA type 3 family.

Its subcellular location is the mitochondrion. In Arabidopsis thaliana (Mouse-ear cress), this protein is Late embryogenesis abundant protein 37.